A 330-amino-acid chain; its full sequence is MDTPLVTDDLDRTLAEQVLTLAEAARAADGVAPLSEHTLLRVRHGAPSGSSRFHLALEDGRAVGFAFVERVAGEPDSGEVVVHPDHRGRGHGTALLHSVDRDAGPDGVRVWAHGRTPQAVSVAREDGWTAVRELHKMRMPLRDIAGDEPGGPWEAPELPEPELRPEVAERVRLRPFVVGQDEQAWLAANARAFADHPEQGQLTLDDLLQREVEDWFDPDGFFLATAKDGGVAAFHWTKTHADGAGLTDGEPVGEVYVVGVDPEWQGSGLGRALTLAGLRHLRDAGLPWVHLYVDGDNEAAVRLYESLGFAMWDTDVMYAPPRDDAPRPNV.

N-acetyltransferase domains are found at residues 5–142 and 171–328; these read LVTD…MPLR and VRLR…APRP. E36 serves as a coordination point for 1D-myo-inositol 2-(L-cysteinylamino)-2-deoxy-alpha-D-glucopyranoside. Residue 80-82 coordinates acetyl-CoA; sequence VVV. A disordered region spans residues 142–161; that stretch reads RDIAGDEPGGPWEAPELPEP. E198, K238, and E254 together coordinate 1D-myo-inositol 2-(L-cysteinylamino)-2-deoxy-alpha-D-glucopyranoside. Acetyl-CoA contacts are provided by residues 258-260 and 265-271; these read VGV and QGSGLGR. Residue Y292 coordinates 1D-myo-inositol 2-(L-cysteinylamino)-2-deoxy-alpha-D-glucopyranoside. Residue 297–302 participates in acetyl-CoA binding; that stretch reads NEAAVR.

Belongs to the acetyltransferase family. MshD subfamily. Monomer.

The catalysed reaction is 1D-myo-inositol 2-(L-cysteinylamino)-2-deoxy-alpha-D-glucopyranoside + acetyl-CoA = mycothiol + CoA + H(+). In terms of biological role, catalyzes the transfer of acetyl from acetyl-CoA to desacetylmycothiol (Cys-GlcN-Ins) to form mycothiol. The polypeptide is Mycothiol acetyltransferase (Nocardiopsis dassonvillei (strain ATCC 23218 / DSM 43111 / CIP 107115 / JCM 7437 / KCTC 9190 / NBRC 14626 / NCTC 10488 / NRRL B-5397 / IMRU 509) (Actinomadura dassonvillei)).